The sequence spans 236 residues: NAD(P)H-hydrate epimerase (236 aa).

A YjeF N-terminal domain is found at 11-217 (AAALDRELMS…SIAKKYDFDV (207 aa)). Position 61-65 (61-65 (NNGGD)) interacts with (6S)-NADPHX. Asn62 and Asp123 together coordinate K(+). (6S)-NADPHX-binding positions include 127–133 (GFSFSGE) and Asp156. K(+) is bound at residue Ser159.

It belongs to the NnrE/AIBP family. The cofactor is K(+).

It localises to the cytoplasm. The protein localises to the mitochondrion. It catalyses the reaction (6R)-NADHX = (6S)-NADHX. The catalysed reaction is (6R)-NADPHX = (6S)-NADPHX. Catalyzes the epimerization of the S- and R-forms of NAD(P)HX, a damaged form of NAD(P)H that is a result of enzymatic or heat-dependent hydration. This is a prerequisite for the S-specific NAD(P)H-hydrate dehydratase to allow the repair of both epimers of NAD(P)HX. This chain is NAD(P)H-hydrate epimerase, found in Neurospora crassa (strain ATCC 24698 / 74-OR23-1A / CBS 708.71 / DSM 1257 / FGSC 987).